The following is a 489-amino-acid chain: Rhamnulokinase (489 aa).

13 to 17 (ASSGR) lines the ATP pocket. Residues Cys-68 and Cys-222 are joined by a disulfide bond. Residues Gly-83 and 236–238 (HDT) contribute to the substrate site. The active-site Proton acceptor is Asp-237. Residue Thr-259 coordinates ATP. Asn-296 serves as a coordination point for substrate. Gln-304 serves as a coordination point for ATP. A disulfide bridge connects residues Cys-353 and Cys-370. Gly-402 is a binding site for ATP. The cysteines at positions 413 and 417 are disulfide-linked.

The protein belongs to the rhamnulokinase family. It depends on Mg(2+) as a cofactor.

It carries out the reaction L-rhamnulose + ATP = L-rhamnulose 1-phosphate + ADP + H(+). It participates in carbohydrate degradation; L-rhamnose degradation; glycerone phosphate from L-rhamnose: step 2/3. Its function is as follows. Involved in the catabolism of L-rhamnose (6-deoxy-L-mannose). Catalyzes the transfer of the gamma-phosphate group from ATP to the 1-hydroxyl group of L-rhamnulose to yield L-rhamnulose 1-phosphate. The protein is Rhamnulokinase of Salmonella paratyphi B (strain ATCC BAA-1250 / SPB7).